A 283-amino-acid chain; its full sequence is 2-dehydro-3-deoxyphosphooctonate aldolase (283 aa).

It belongs to the KdsA family.

The protein resides in the cytoplasm. The enzyme catalyses D-arabinose 5-phosphate + phosphoenolpyruvate + H2O = 3-deoxy-alpha-D-manno-2-octulosonate-8-phosphate + phosphate. The protein operates within carbohydrate biosynthesis; 3-deoxy-D-manno-octulosonate biosynthesis; 3-deoxy-D-manno-octulosonate from D-ribulose 5-phosphate: step 2/3. It functions in the pathway bacterial outer membrane biogenesis; lipopolysaccharide biosynthesis. The sequence is that of 2-dehydro-3-deoxyphosphooctonate aldolase from Methylococcus capsulatus (strain ATCC 33009 / NCIMB 11132 / Bath).